The primary structure comprises 62 residues: Large ribosomal subunit protein uL29 (62 aa).

This sequence belongs to the universal ribosomal protein uL29 family.

The protein is Large ribosomal subunit protein uL29 of Laribacter hongkongensis (strain HLHK9).